Consider the following 623-residue polypeptide: Glutathione import ATP-binding protein GsiA (623 aa).

ABC transporter domains lie at 15-269 (VENL…RALL) and 314-564 (LRVR…RKLL). ATP-binding positions include 49 to 56 (GESGSGKS) and 357 to 364 (GESGSGKS).

It belongs to the ABC transporter superfamily. Glutathione importer (TC 3.A.1.5.11) family. As to quaternary structure, the complex is composed of two ATP-binding proteins (GsiA), two transmembrane proteins (GsiC and GsiD) and a solute-binding protein (GsiB).

The protein resides in the cell inner membrane. The enzyme catalyses glutathione(out) + ATP + H2O = glutathione(in) + ADP + phosphate + H(+). In terms of biological role, part of the ABC transporter complex GsiABCD involved in glutathione import. Responsible for energy coupling to the transport system. The polypeptide is Glutathione import ATP-binding protein GsiA (Shigella flexneri).